Here is a 382-residue protein sequence, read N- to C-terminus: 8-amino-7-oxononanoate synthase (382 aa).

Residues Arg-22 and Arg-29 each coordinate substrate. Position 109-110 (109-110 (GF)) interacts with pyridoxal 5'-phosphate. Substrate is bound at residue His-134. Pyridoxal 5'-phosphate contacts are provided by residues Ser-182, 207-210 (DDAH), and 233-236 (TLSK). The residue at position 236 (Lys-236) is an N6-(pyridoxal phosphate)lysine. Thr-345 contacts substrate.

This sequence belongs to the class-II pyridoxal-phosphate-dependent aminotransferase family. BioF subfamily. Homodimer. Pyridoxal 5'-phosphate serves as cofactor.

The catalysed reaction is 6-carboxyhexanoyl-[ACP] + L-alanine + H(+) = (8S)-8-amino-7-oxononanoate + holo-[ACP] + CO2. It participates in cofactor biosynthesis; biotin biosynthesis. Its function is as follows. Catalyzes the decarboxylative condensation of pimeloyl-[acyl-carrier protein] and L-alanine to produce 8-amino-7-oxononanoate (AON), [acyl-carrier protein], and carbon dioxide. This Granulibacter bethesdensis (strain ATCC BAA-1260 / CGDNIH1) protein is 8-amino-7-oxononanoate synthase.